A 565-amino-acid polypeptide reads, in one-letter code: uncharacterized protein (565 aa).

13 helical membrane-spanning segments follow: residues isoleucine 8–phenylalanine 28, leucine 43–isoleucine 63, methionine 95–isoleucine 115, tryptophan 137–leucine 157, methionine 167–valine 187, phenylalanine 227–tyrosine 247, tryptophan 268–leucine 288, isoleucine 314–phenylalanine 334, valine 367–isoleucine 387, alanine 424–valine 444, phenylalanine 460–isoleucine 480, proline 482–glycine 502, and valine 516–glutamate 536.

This sequence to M.pneumoniae MPN_095 and MPN_096.

It is found in the cell membrane. This is an uncharacterized protein from Mycoplasma pneumoniae (strain ATCC 29342 / M129 / Subtype 1) (Mycoplasmoides pneumoniae).